The chain runs to 432 residues: 23S rRNA (uracil(1939)-C(5))-methyltransferase RlmD (432 aa).

The 59-residue stretch at 10 to 68 (RVTTREIITVTTDGLDAFGQGVARHHGKALFIAGLLPGERAEVVLSEDKKQFARGDVKK) folds into the TRAM domain. Residues C81, C87, C90, and C162 each contribute to the [4Fe-4S] cluster site. 6 residues coordinate S-adenosyl-L-methionine: Q265, F294, N299, E315, N342, and D363. C389 functions as the Nucleophile in the catalytic mechanism.

It belongs to the class I-like SAM-binding methyltransferase superfamily. RNA M5U methyltransferase family. RlmD subfamily.

The catalysed reaction is uridine(1939) in 23S rRNA + S-adenosyl-L-methionine = 5-methyluridine(1939) in 23S rRNA + S-adenosyl-L-homocysteine + H(+). Its function is as follows. Catalyzes the formation of 5-methyl-uridine at position 1939 (m5U1939) in 23S rRNA. This Cronobacter sakazakii (strain ATCC BAA-894) (Enterobacter sakazakii) protein is 23S rRNA (uracil(1939)-C(5))-methyltransferase RlmD.